The sequence spans 328 residues: D-cysteine desulfhydrase (328 aa).

At Lys-51 the chain carries N6-(pyridoxal phosphate)lysine.

It belongs to the ACC deaminase/D-cysteine desulfhydrase family. Homodimer. Requires pyridoxal 5'-phosphate as cofactor.

It catalyses the reaction D-cysteine + H2O = hydrogen sulfide + pyruvate + NH4(+) + H(+). Functionally, catalyzes the alpha,beta-elimination reaction of D-cysteine and of several D-cysteine derivatives. It could be a defense mechanism against D-cysteine. In Salmonella schwarzengrund (strain CVM19633), this protein is D-cysteine desulfhydrase.